Reading from the N-terminus, the 282-residue chain is Phosphatidylglycerol--prolipoprotein diacylglyceryl transferase (282 aa).

Transmembrane regions (helical) follow at residues 19 to 39 (IGPITIRWYGLLIATAVLIGV), 59 to 79 (LSIWLVIGAIPAARIYYVLFQ), 90 to 110 (IIAIWQGGIAIHGAIIGGTLA), and 120 to 140 (VPFWQLADLVAPSLILGQAIG). Arg-141 contributes to the a 1,2-diacyl-sn-glycero-3-phospho-(1'-sn-glycerol) binding site. 3 helical membrane passes run 181-201 (TFLYESIWDLMVFALLITLFF), 212-232 (VGTLFMVYLATYSLGRLWIEG), and 245-265 (IAQVVSLTGITLGLAGLAWLY).

The protein belongs to the Lgt family.

Its subcellular location is the cell inner membrane. The catalysed reaction is L-cysteinyl-[prolipoprotein] + a 1,2-diacyl-sn-glycero-3-phospho-(1'-sn-glycerol) = an S-1,2-diacyl-sn-glyceryl-L-cysteinyl-[prolipoprotein] + sn-glycerol 1-phosphate + H(+). It functions in the pathway protein modification; lipoprotein biosynthesis (diacylglyceryl transfer). Catalyzes the transfer of the diacylglyceryl group from phosphatidylglycerol to the sulfhydryl group of the N-terminal cysteine of a prolipoprotein, the first step in the formation of mature lipoproteins. This Trichormus variabilis (strain ATCC 29413 / PCC 7937) (Anabaena variabilis) protein is Phosphatidylglycerol--prolipoprotein diacylglyceryl transferase.